A 288-amino-acid polypeptide reads, in one-letter code: Oxaloacetate decarboxylase (288 aa).

S47 contributes to the substrate binding site. A Mg(2+)-binding site is contributed by D85. Residues R156 and H232 each coordinate substrate.

The protein belongs to the isocitrate lyase/PEP mutase superfamily. Oxaloacetate decarboxylase family. Homotetramer; dimer of dimers. The cofactor is Mg(2+).

It carries out the reaction oxaloacetate + H(+) = pyruvate + CO2. In terms of biological role, catalyzes the decarboxylation of oxaloacetate into pyruvate. Seems to play a role in maintaining cellular concentrations of bicarbonate and pyruvate. This chain is Oxaloacetate decarboxylase, found in Rhodopseudomonas palustris (strain BisB18).